Consider the following 253-residue polypeptide: Hydroxyacylglutathione hydrolase (253 aa).

Positions 54, 56, 58, 59, 112, 131, and 169 each coordinate Zn(2+).

Belongs to the metallo-beta-lactamase superfamily. Glyoxalase II family. As to quaternary structure, monomer. It depends on Zn(2+) as a cofactor.

It catalyses the reaction an S-(2-hydroxyacyl)glutathione + H2O = a 2-hydroxy carboxylate + glutathione + H(+). It functions in the pathway secondary metabolite metabolism; methylglyoxal degradation; (R)-lactate from methylglyoxal: step 2/2. In terms of biological role, thiolesterase that catalyzes the hydrolysis of S-D-lactoyl-glutathione to form glutathione and D-lactic acid. The chain is Hydroxyacylglutathione hydrolase from Bartonella henselae (strain ATCC 49882 / DSM 28221 / CCUG 30454 / Houston 1) (Rochalimaea henselae).